Consider the following 128-residue polypeptide: Large ribosomal subunit protein eL22 (128 aa).

At T62 the chain carries Phosphothreonine. Residue S66 is modified to Phosphoserine. An N6-succinyllysine modification is found at K69.

Belongs to the eukaryotic ribosomal protein eL22 family. As to quaternary structure, component of the large ribosomal subunit.

The protein localises to the cytoplasm. In terms of biological role, component of the large ribosomal subunit. The ribosome is a large ribonucleoprotein complex responsible for the synthesis of proteins in the cell. The sequence is that of Large ribosomal subunit protein eL22 (RPL22) from Sus scrofa (Pig).